A 25-amino-acid chain; its full sequence is Neuromedin-U-25 (25 aa).

At Asn-25 the chain carries Asparagine amide.

It belongs to the NmU family.

It localises to the secreted. Its function is as follows. Stimulates uterine smooth muscle contraction and causes selective vasoconstriction. The sequence is that of Neuromedin-U-25 from Rana temporaria (European common frog).